A 128-amino-acid chain; its full sequence is Small ribosomal subunit protein eS8 (128 aa).

Positions 1–31 (MAWYQGNDLRKPTGGKKTRHRKKRKHELGRP) are disordered. The segment covering 13–27 (TGGKKTRHRKKRKHE) has biased composition (basic residues).

This sequence belongs to the eukaryotic ribosomal protein eS8 family. As to quaternary structure, part of the 30S ribosomal subunit.

The chain is Small ribosomal subunit protein eS8 from Staphylothermus marinus (strain ATCC 43588 / DSM 3639 / JCM 9404 / F1).